The sequence spans 347 residues: Cytosolic sulfotransferase 14 (347 aa).

87 to 92 (KSGTTW) serves as a coordination point for 3'-phosphoadenylyl sulfate. The active-site Proton acceptor is the His155. 3'-phosphoadenylyl sulfate is bound by residues Arg177, Ser185, Tyr244, and 310–312 (RKG).

Belongs to the sulfotransferase 1 family.

The protein resides in the cytoplasm. Sulfotransferase that utilizes 3'-phospho-5'-adenylyl sulfate (PAPS) as sulfonate donor. Not active with 11-hydroxyjasmonate or 12-hydroxyjasmonate. In Arabidopsis thaliana (Mouse-ear cress), this protein is Cytosolic sulfotransferase 14 (SOT14).